The chain runs to 892 residues: Major core protein OPG136 precursor (892 aa).

A propeptide spanning residues 616–698 (SPEGEETIIC…ILDRIITNAG (83 aa)) is cleaved from the precursor.

This sequence belongs to the orthopxvirus protein OPG136 family. As to quaternary structure, interacts with P39/A4. Post-translationally, the precursor is cleaved by OPG083 to give rise to the 62 kDa mature protein during virion maturation. Proteolytic cleavage of major core proteins OPG136, OPG129, and OPG098, which occurs at a late stage of core formation, is required for production of infectious mature virions (MV).

It is found in the virion. Functionally, core protein 4a is the most abundant virion protein. Major component of the virion core that undergoes proteolytic processing during the immature virion (IV) to mature virion (MV) transition. This chain is Major core protein OPG136 precursor (OPG136), found in Homo sapiens (Human).